Reading from the N-terminus, the 147-residue chain is Phospholipase A2 inhibitor subunit B (147 aa).

In terms of domain architecture, C-type lectin spans 62–143 (EICEEAGGHI…DEKLLVVCEF (82 aa)). Cystine bridges form between cysteine 64–cysteine 141 and cysteine 119–cysteine 133. Asparagine 103 carries N-linked (GlcNAc...) asparagine glycosylation.

It belongs to the alpha-type phospholipase A2 inhibitor family. As to quaternary structure, homo- or heterotrimer; homotrimer of PLI-A chains, two PLI-A and one PLI-B chains, one PLI-A and two PLI-B chains, and homotrimer of PLI-B chains (with a ratio of 1:3:3:1). Expressed by the liver.

The protein resides in the secreted. In terms of biological role, PLI binds directly phospholipase A2 in the presence or absence of calcium. Inhibitory activity of the PLI-B homotrimer is less specific than that of the PLI-A homotrimer. The sequence is that of Phospholipase A2 inhibitor subunit B from Protobothrops flavoviridis (Habu).